Here is a 265-residue protein sequence, read N- to C-terminus: Apolipoprotein A-I (265 aa).

The N-terminal stretch at 1–18 (MKAVVLTLAVLFLTGSQA) is a signal peptide. Repeat copies occupy residues 67-88 (LKLV…EHLG) and 89-110 (PVAQ…REIN). The tract at residues 67–265 (LKLVDNWDTL…IDEAAKKLTA (199 aa)) is 10 X approximate tandem repeats. The stretch at 111–121 (KDLEDVRQKTQ) is one 3; half-length repeat. Tandem repeats lie at residues 122–143 (PFLD…QKVE), 144–165 (PLSA…EQVT), 166–187 (PLGE…TQLA), 188–209 (PYSE…EGGS), and 210–231 (ASLA…EKAK). Position 193 is a methionine sulfoxide (M193). Residues 232–242 (PVLEDIHQGLM) form a 9; half-length repeat. Residues M242 and M244 each carry the methionine sulfoxide modification. Repeat unit 10 spans residues 243 to 265 (PMWESFKTGVLNVIDEAAKKLTA).

The protein belongs to the apolipoprotein A1/A4/E family. In terms of assembly, homodimer. Interacts with APOA1BP and CLU. Component of a sperm activating protein complex (SPAP), consisting of APOA1, an immunoglobulin heavy chain, an immunoglobulin light chain and albumin. Interacts with NDRG1. Interacts with SCGB3A2. Interacts with NAXE and YJEFN3. In terms of processing, glycosylated. Post-translationally, palmitoylated. Phosphorylation sites are present in the extracellular medium. As to expression, major protein of plasma HDL, also found in chylomicrons.

It is found in the secreted. Its function is as follows. Participates in the reverse transport of cholesterol from tissues to the liver for excretion by promoting cholesterol efflux from tissues and by acting as a cofactor for the lecithin cholesterol acyltransferase (LCAT). As part of the SPAP complex, activates spermatozoa motility. The polypeptide is Apolipoprotein A-I (APOA1) (Tupaia belangeri (Common tree shrew)).